A 618-amino-acid chain; its full sequence is Vacuolar-sorting receptor 5 (618 aa).

Residues 1–23 (MSPSNKGTVLALILALTMVVVNG) form the signal peptide. The Lumenal portion of the chain corresponds to 24–563 (FSSRFFVEKS…IERRSGSRSR (540 aa)). A PA domain is found at 58–164 (KYGGFMIGSV…SFGDSLKKAL (107 aa)). 3 N-linked (GlcNAc...) asparagine glycosylation sites follow: Asn81, Asn293, and Asn430. 2 consecutive EGF-like domains span residues 412-462 (ETNE…TSCK) and 465-511 (GPAR…LKCE). Disulfide bonds link Cys416-Cys434, Cys423-Cys443, Cys445-Cys461, Cys469-Cys489, Cys476-Cys497, Cys499-Cys510, and Cys540-Cys553. An EGF-like 3; calcium-binding domain is found at 512–554 (DIDECKEKSACKCDGCKCKNNWGGYECKCSNNSIYMKEEDTCI). Asn542 carries N-linked (GlcNAc...) asparagine glycosylation. Residues 564–584 (GLFTIVVLTAIAGISLGAYIF) form a helical membrane-spanning segment. Topologically, residues 585–618 (YKYHLQSYMDSEIVSIMSQYIPLDSQSINQDSFK) are cytoplasmic. Positions 604-607 (YIPL) match the Tyrosine-based internalization motif motif.

This sequence belongs to the VSR (BP-80) family. Expressed in seedlings, roots, leaves, flowers and siliques.

It is found in the membrane. Its subcellular location is the golgi apparatus membrane. The protein resides in the cytoplasmic vesicle. The protein localises to the clathrin-coated vesicle membrane. It localises to the prevacuolar compartment membrane. Functionally, vacuolar-sorting receptor (VSR) involved in clathrin-coated vesicles sorting from Golgi apparatus to vacuoles. The protein is Vacuolar-sorting receptor 5 (VSR5) of Arabidopsis thaliana (Mouse-ear cress).